The primary structure comprises 1132 residues: MIATPLKHSRIYLPPEASSQRRNLPMDAIFFDSIPSGTLTPVKDLVKYQNSSLKLNDHKKNQFLKMTTFNNKNIFQSTMLTEATTSNSSLDISAIKPNKDGLKNKANYESPGKIFLRMKEKVLRDKQEQPSRNSSLLEPQKSGNNETFTPNRVEKKKLQHTYLCEEKENNKSFQSDDSSLRASVQGVPLESSNNDIFLPVKQKIQCQQEKKAPLHNLTYELPTLNQEQENFLAVEARNKTLTRAQLAKQIFHSKESIVATTKSKKDTFVLESVDSADEQFQNTNAETLSTNCIPIKNGSLLMVSDSERTTEGTSQQKVKEGNGKTVPGETGLPGSMKDTCKIVLATPRLHITIPRRSKRNISKLSPPRIFQTVTNGLKKNQVVQLQEWMIKSINNNTAICVEGKLIDVTNIYWHSNVIIERIEHNKLRTISGNVYILKGMIDQISMKEAGYPNYLIRKFMFGFPENWKEHIDNFLEQLRAGEKNREKTKQKQKTGRSVRDIRKSMKNDARENQTDTAQRATTTYDFDCDNLELKSNKHSESPGATELNMCHSNCQNKPTLRFPDDQVNNTIQNGGGDDLSNQELIGKKEYKMSSKKLKIGERTNERIIKSQKQETTEELDVSIDILTSREQFFSDEERKYMAINQKKAYILVTPLKSRKVIEQRCMRYNLSAGTIKAVTDFVIPECQKKSPISKSMGTLENTFEGHKSKNKEDCDERDLLTVNRKIKISNLEKEQMLTSDFKKNTRLLPKLKKIENQVAMSFYKHQSSPDLSSEESETEKEIKRKAEVKKTKAGNTKEAVVHLRKSTRNTSNIPVILEPETEESENEFYIKQKKARPSVKETLQKSGVRKEFPITEAVGSDKTNRHPLECLPGLIQDKEWNEKELQKLHCAFASLPKHKPGFWSEVAAAVGSRSPEECQRKYMENPRGKGSQKHVTKKKPANSKGQNGKRGDADQKQTIKITAKVGTLKRKQQMREFLEQLPKDDHDDFFSTTPLQHQRILLPSFQDSEDDDDILPNMDKNPTTPSSVIFPLVKTPQCQHVSPGMLGSINRNDCDKYVFRMQKYHKSNGGIVWGNIKKKLVETDFSTPTPRRKTPFNTDLGENSGIGKLFTNAVESLDEEEKDYYFSNSDSA.

A Glycyl lysine isopeptide (Lys-Gly) (interchain with G-Cter in SUMO2) cross-link involves residue Lys-7. Ser-9 bears the Phosphoserine mark. Lys-65 is covalently cross-linked (Glycyl lysine isopeptide (Lys-Gly) (interchain with G-Cter in SUMO2)). 5 positions are modified to phosphoserine: Ser-110, Ser-131, Ser-135, Ser-172, and Ser-192. The tract at residues 123 to 154 is disordered; that stretch reads LRDKQEQPSRNSSLLEPQKSGNNETFTPNRVE. The span at 130–150 shows a compositional bias: polar residues; the sequence is PSRNSSLLEPQKSGNNETFTP. Residues Lys-211 and Lys-262 each participate in a glycyl lysine isopeptide (Lys-Gly) (interchain with G-Cter in SUMO2) cross-link. A Phosphoserine modification is found at Ser-299. Positions 306-332 are disordered; the sequence is SERTTEGTSQQKVKEGNGKTVPGETGL. Ser-365 bears the Phosphoserine mark. The 87-residue stretch at 383–469 folds into the SANTA domain; the sequence is VQLQEWMIKS…MFGFPENWKE (87 aa). Residues 482–518 are disordered; sequence EKNREKTKQKQKTGRSVRDIRKSMKNDARENQTDTAQ. The segment covering 497–513 has biased composition (basic and acidic residues); sequence SVRDIRKSMKNDARENQ. Residues Lys-534, Lys-612, Lys-639, and Lys-647 each participate in a glycyl lysine isopeptide (Lys-Gly) (interchain with G-Cter in SUMO2) cross-link. Thr-653 carries the phosphothreonine modification. Glycyl lysine isopeptide (Lys-Gly) (interchain with G-Cter in SUMO2) cross-links involve residues Lys-727 and Lys-742. Residues 765-798 form a disordered region; it reads HQSSPDLSSEESETEKEIKRKAEVKKTKAGNTKE. 2 positions are modified to phosphoserine: Ser-772 and Ser-773. Residues 779 to 790 show a composition bias toward basic and acidic residues; that stretch reads EKEIKRKAEVKK. The residue at position 821 (Thr-821) is a Phosphothreonine. Ser-824 bears the Phosphoserine mark. Residue Lys-840 forms a Glycyl lysine isopeptide (Lys-Gly) (interchain with G-Cter in SUMO2) linkage. Ser-860 is modified (phosphoserine). The region spanning 875-930 is the SANT domain; that stretch reads IQDKEWNEKELQKLHCAFASLPKHKPGFWSEVAAAVGSRSPEECQRKYMENPRGKG. Residue Lys-899 forms a Glycyl lysine isopeptide (Lys-Gly) (interchain with G-Cter in SUMO2) linkage. Residues 923–957 are disordered; that stretch reads MENPRGKGSQKHVTKKKPANSKGQNGKRGDADQKQ. Basic residues predominate over residues 930-941; it reads GSQKHVTKKKPA. Residues Lys-956, Lys-964, and Lys-983 each participate in a glycyl lysine isopeptide (Lys-Gly) (interchain with G-Cter in SUMO2) cross-link. Position 1008 is a phosphoserine (Ser-1008). Lys-1079 participates in a covalent cross-link: Glycyl lysine isopeptide (Lys-Gly) (interchain with G-Cter in SUMO2). At Ser-1086 the chain carries Phosphoserine. Phosphothreonine occurs at positions 1087 and 1089. A phosphoserine mark is found at Ser-1104 and Ser-1116.

In terms of assembly, interacts with SP1. Interacts with MIS18A. Identified in a complex containing MIS18A, OIP5/MIS18B, MIS18BP1, RBBP7 and RBBP4. Interacts with KAT7/HBO1. Interacts (via N-terminus) with FLNA (via N-terminus).

It is found in the nucleus. The protein localises to the chromosome. Its subcellular location is the centromere. Required for recruitment of CENPA to centromeres and normal chromosome segregation during mitosis. The chain is Mis18-binding protein 1 (MIS18BP1) from Homo sapiens (Human).